Here is a 367-residue protein sequence, read N- to C-terminus: Outer membrane porin C (367 aa).

An N-terminal signal peptide occupies residues 1 to 21 (MKVKVLSLLVPALLVAGAANA). The Periplasmic portion of the chain corresponds to 22–33 (AEVYNKDGNKLD). A beta stranded membrane pass occupies residues 34-42 (LYGKVDGLH). Topologically, residues 43–53 (YFSDNKDVDGD) are extracellular. A beta stranded transmembrane segment spans residues 54–63 (QTYMRLGFKG). At 64 to 73 (ETQVTDQLTG) the chain is on the periplasmic side. A beta stranded transmembrane segment spans residues 74–84 (YGQWEYQIQGN). Residues 85-91 (SAENENN) lie on the Extracellular side of the membrane. Residues 92–101 (SWTRVAFAGL) form a beta stranded membrane-spanning segment. The Periplasmic portion of the chain corresponds to 102-106 (KFQDV). The beta stranded transmembrane segment at 107 to 115 (GSFDYGRNY) threads the bilayer. Positions 116 to 133 (GVVYDVTSWTDVLPEFGG) are loop L3; may constrict the pore. At 116–141 (GVVYDVTSWTDVLPEFGGDTYGSDNF) the chain is on the extracellular side. The beta stranded transmembrane segment at 142–154 (MQQRGNGFATYRN) threads the bilayer. The Periplasmic segment spans residues 155-163 (TDFFGLVDG). Residues 164–171 (LNFAVQYQ) traverse the membrane as a beta stranded segment. At 172 to 200 (GKNGNPSGEGFTSGVTNNGRDALRQNGDG) the chain is on the extracellular side. The beta stranded transmembrane segment at 201–207 (VGGSITY) threads the bilayer. The Periplasmic segment spans residues 208–211 (DYEG). Residues 212-219 (FGIGGAIS) form a beta stranded membrane-spanning segment. Residues 220-241 (SSKRTDAQNTAAYIGNGDRAET) lie on the Extracellular side of the membrane. Residues 242–248 (YTGGLKY) form a beta stranded membrane-spanning segment. Residues 249–252 (DANN) are Periplasmic-facing. Residues 253 to 260 (IYLAAQYT) form a beta stranded membrane-spanning segment. Topologically, residues 261-269 (QTYNATRVG) are extracellular. Residues 270–286 (SLGWANKAQNFEAVAQY) traverse the membrane as a beta stranded segment. The Periplasmic segment spans residues 287–291 (QFDFG). The chain crosses the membrane as a beta stranded span at residues 292–299 (LRPSLAYL). At 300–318 (QSKGKNLGRGYDDEDILKY) the chain is on the extracellular side. A beta stranded transmembrane segment spans residues 319-326 (VDVGATYY). Residues 327–330 (FNKN) lie on the Periplasmic side of the membrane. The beta stranded transmembrane segment at 331-338 (MSTYVDYK) threads the bilayer. The Extracellular segment spans residues 339 to 358 (INLLDDNQFTRDAGINTDNI). Mg(2+)-binding residues include Asn-340, Leu-342, and Thr-355. Residues 359–366 (VALGLVYQ) form a beta stranded membrane-spanning segment. A topological domain (periplasmic) is located at residue Phe-367.

The protein belongs to the Gram-negative porin family. Homotrimer. Forms mixed heterotrimers with OmpF and with PhoE; other mixed heterotrimers are also probable.

It localises to the cell outer membrane. In terms of biological role, forms pores that allow passive diffusion of small molecules across the outer membrane. (Microbial infection) Supports colicin E5 entry in the absence of its major receptor OmpF. Functionally, (Microbial infection) A mixed OmpC-OmpF heterotrimer is the outer membrane receptor for toxin CdiA-EC536; polymorphisms in extracellular loops 4 and 5 of OmpC confer susceptibility to CdiA-EC536-mediated toxicity. In Escherichia coli (strain K12), this protein is Outer membrane porin C (ompC).